The chain runs to 447 residues: UPF0210 protein OEOE_0945 (447 aa).

It belongs to the UPF0210 family. As to quaternary structure, homodimer.

The protein is UPF0210 protein OEOE_0945 of Oenococcus oeni (strain ATCC BAA-331 / PSU-1).